The sequence spans 865 residues: Chitin synthase 3 (865 aa).

The tract at residues 1 to 59 is disordered; the sequence is MASQYPGHQLDDIPSTNVYRPPPRHEDDEAEHALLHQNSAYQSQYDDPHSRPLTPGQES. Basic and acidic residues predominate over residues 23-34; the sequence is PRHEDDEAEHAL. Residues 36 to 45 are compositionally biased toward polar residues; it reads HQNSAYQSQY. N-linked (GlcNAc...) asparagine glycans are attached at residues Asn-64, Asn-95, and Asn-538. 3 consecutive transmembrane segments (helical) span residues 565–585, 620–640, and 650–670; these read FFLHIQMIYNIVSVLLSWFSL, IINTILQYLYLAFLLLQFILA, and VAYIISFCLFGLIQLYVIVLS. Asn-682 carries N-linked (GlcNAc...) asparagine glycosylation. Helical transmembrane passes span 707–727, 735–755, and 837–857; these read IVIIALAATFGLYFVASFLYM, SFAQYLLLMPSFINILMIYAF, and LVATWIFSNALLAVAITSDSL.

This sequence belongs to the chitin synthase family. Class III subfamily.

It localises to the cell membrane. The catalysed reaction is [(1-&gt;4)-N-acetyl-beta-D-glucosaminyl](n) + UDP-N-acetyl-alpha-D-glucosamine = [(1-&gt;4)-N-acetyl-beta-D-glucosaminyl](n+1) + UDP + H(+). Functionally, polymerizes chitin, a structural polymer of the cell wall and septum, by transferring the sugar moiety of UDP-GlcNAc to the non-reducing end of the growing chitin polymer. Is not only stable at different pH, but is also able to tolerate a broad temperature range. With CHS2, plays an important role in virulence. This Exophiala dermatitidis (strain ATCC 34100 / CBS 525.76 / NIH/UT8656) (Black yeast) protein is Chitin synthase 3.